The following is a 310-amino-acid chain: Beta sliding clamp (310 aa).

This sequence belongs to the beta sliding clamp family. In terms of assembly, forms a ring-shaped head-to-tail homodimer around DNA which binds and tethers DNA polymerases and other proteins to the DNA. The DNA replisome complex has a single clamp-loading complex (3 tau and 1 each of delta, delta', psi and chi subunits) which binds 3 Pol III cores (1 core on the leading strand and 2 on the lagging strand) each with a beta sliding clamp dimer. Additional proteins in the replisome are other copies of gamma, psi and chi, Ssb, DNA helicase and RNA primase.

Its subcellular location is the cytoplasm. Its function is as follows. Confers DNA tethering and processivity to DNA polymerases and other proteins. Acts as a clamp, forming a ring around DNA (a reaction catalyzed by the clamp-loading complex) which diffuses in an ATP-independent manner freely and bidirectionally along dsDNA. Initially characterized for its ability to contact the catalytic subunit of DNA polymerase III (Pol III), a complex, multichain enzyme responsible for most of the replicative synthesis in bacteria; Pol III exhibits 3'-5' exonuclease proofreading activity. The beta chain is required for initiation of replication as well as for processivity of DNA replication. The protein is Beta sliding clamp (dnaN) of Micrococcus luteus (Micrococcus lysodeikticus).